The following is a 604-amino-acid chain: Threonine--tRNA ligase (604 aa).

The interval 210-501 is catalytic; sequence DHRKIGTEME…LTEHYAGEFP (292 aa). Zn(2+) is bound by residues C302, H353, and H478.

The protein belongs to the class-II aminoacyl-tRNA synthetase family. As to quaternary structure, homodimer. Zn(2+) serves as cofactor.

Its subcellular location is the cytoplasm. The catalysed reaction is tRNA(Thr) + L-threonine + ATP = L-threonyl-tRNA(Thr) + AMP + diphosphate + H(+). Functionally, catalyzes the attachment of threonine to tRNA(Thr) in a two-step reaction: L-threonine is first activated by ATP to form Thr-AMP and then transferred to the acceptor end of tRNA(Thr). Also edits incorrectly charged L-seryl-tRNA(Thr). In Sulfurovum sp. (strain NBC37-1), this protein is Threonine--tRNA ligase.